A 361-amino-acid polypeptide reads, in one-letter code: GTPase Obg (361 aa).

The region spanning 1 to 159 is the Obg domain; that stretch reads MKFVDEAFID…KNLKLELKVL (159 aa). Residues 160–334 enclose the OBG-type G domain; it reads ADVGLLGMPN…LIKTIYQHVK (175 aa). GTP is bound by residues 166 to 173, 191 to 195, 213 to 216, 284 to 287, and 315 to 317; these read GMPNAGKS, FTTLH, DLPG, NKLD, and SAL. Mg(2+) contacts are provided by Ser-173 and Thr-193. The interval 339-361 is disordered; sequence SEQPVEEVDPRFVPLPPESPETP. The span at 351-361 shows a compositional bias: pro residues; sequence VPLPPESPETP.

The protein belongs to the TRAFAC class OBG-HflX-like GTPase superfamily. OBG GTPase family. As to quaternary structure, monomer. Mg(2+) is required as a cofactor.

It localises to the cytoplasm. Its function is as follows. An essential GTPase which binds GTP, GDP and possibly (p)ppGpp with moderate affinity, with high nucleotide exchange rates and a fairly low GTP hydrolysis rate. Plays a role in control of the cell cycle, stress response, ribosome biogenesis and in those bacteria that undergo differentiation, in morphogenesis control. This chain is GTPase Obg, found in Polaromonas sp. (strain JS666 / ATCC BAA-500).